We begin with the raw amino-acid sequence, 429 residues long: Arginine biosynthesis bifunctional protein ArgJ (429 aa).

Substrate contacts are provided by T181, K207, T218, E302, N424, and S429. T218 (nucleophile) is an active-site residue.

Belongs to the ArgJ family. As to quaternary structure, heterotetramer of two alpha and two beta chains.

The protein localises to the cytoplasm. It carries out the reaction N(2)-acetyl-L-ornithine + L-glutamate = N-acetyl-L-glutamate + L-ornithine. The enzyme catalyses L-glutamate + acetyl-CoA = N-acetyl-L-glutamate + CoA + H(+). It participates in amino-acid biosynthesis; L-arginine biosynthesis; L-ornithine and N-acetyl-L-glutamate from L-glutamate and N(2)-acetyl-L-ornithine (cyclic): step 1/1. It functions in the pathway amino-acid biosynthesis; L-arginine biosynthesis; N(2)-acetyl-L-ornithine from L-glutamate: step 1/4. Catalyzes two activities which are involved in the cyclic version of arginine biosynthesis: the synthesis of N-acetylglutamate from glutamate and acetyl-CoA as the acetyl donor, and of ornithine by transacetylation between N(2)-acetylornithine and glutamate. This Chlorobium chlorochromatii (strain CaD3) protein is Arginine biosynthesis bifunctional protein ArgJ.